A 69-amino-acid chain; its full sequence is Mitotic-spindle organizing protein 1 (69 aa).

It belongs to the MOZART1 family. Part of the gamma-tubulin complex.

It localises to the cytoplasm. The protein localises to the cytoskeleton. Its subcellular location is the microtubule organizing center. It is found in the spindle. Its function is as follows. Required for gamma-tubulin complex recruitment to the microtubule organizing centers (MTOCs). The chain is Mitotic-spindle organizing protein 1 from Picea sitchensis (Sitka spruce).